A 241-amino-acid polypeptide reads, in one-letter code: Putative ABC transporter ATP-binding protein CA_C0773 (241 aa).

An ABC transporter domain is found at 2–241 (IKLEKVSFTY…REFLMECNII (240 aa)). 34–41 (GPNGSGKS) is a binding site for ATP.

The protein belongs to the ABC transporter superfamily.

The protein resides in the cell membrane. Its function is as follows. Probably part of an ABC transporter complex. Responsible for energy coupling to the transport system. The polypeptide is Putative ABC transporter ATP-binding protein CA_C0773 (Clostridium acetobutylicum (strain ATCC 824 / DSM 792 / JCM 1419 / IAM 19013 / LMG 5710 / NBRC 13948 / NRRL B-527 / VKM B-1787 / 2291 / W)).